The sequence spans 235 residues: 7-cyano-7-deazaguanine synthase (235 aa).

12–22 (FSGGQDSTACL) is a binding site for ATP. Positions 200, 215, 218, and 221 each coordinate Zn(2+).

This sequence belongs to the QueC family. Zn(2+) is required as a cofactor.

The enzyme catalyses 7-carboxy-7-deazaguanine + NH4(+) + ATP = 7-cyano-7-deazaguanine + ADP + phosphate + H2O + H(+). It functions in the pathway purine metabolism; 7-cyano-7-deazaguanine biosynthesis. Catalyzes the ATP-dependent conversion of 7-carboxy-7-deazaguanine (CDG) to 7-cyano-7-deazaguanine (preQ(0)). The polypeptide is 7-cyano-7-deazaguanine synthase (Methylibium petroleiphilum (strain ATCC BAA-1232 / LMG 22953 / PM1)).